The chain runs to 260 residues: Ubiquinone/menaquinone biosynthesis C-methyltransferase UbiE (260 aa).

Residues threonine 83, aspartate 104, 132–133 (NA), and serine 149 contribute to the S-adenosyl-L-methionine site.

Belongs to the class I-like SAM-binding methyltransferase superfamily. MenG/UbiE family.

It catalyses the reaction a 2-demethylmenaquinol + S-adenosyl-L-methionine = a menaquinol + S-adenosyl-L-homocysteine + H(+). The enzyme catalyses a 2-methoxy-6-(all-trans-polyprenyl)benzene-1,4-diol + S-adenosyl-L-methionine = a 5-methoxy-2-methyl-3-(all-trans-polyprenyl)benzene-1,4-diol + S-adenosyl-L-homocysteine + H(+). The protein operates within quinol/quinone metabolism; menaquinone biosynthesis; menaquinol from 1,4-dihydroxy-2-naphthoate: step 2/2. It participates in cofactor biosynthesis; ubiquinone biosynthesis. Its function is as follows. Methyltransferase required for the conversion of demethylmenaquinol (DMKH2) to menaquinol (MKH2) and the conversion of 2-polyprenyl-6-methoxy-1,4-benzoquinol (DDMQH2) to 2-polyprenyl-3-methyl-6-methoxy-1,4-benzoquinol (DMQH2). This Vibrio vulnificus (strain CMCP6) protein is Ubiquinone/menaquinone biosynthesis C-methyltransferase UbiE.